We begin with the raw amino-acid sequence, 574 residues long: Aspartate--tRNA ligase (574 aa).

Glu-172 is a binding site for L-aspartate. The segment at 196 to 199 is aspartate; that stretch reads QIFK. An L-aspartate-binding site is contributed by Arg-218. ATP contacts are provided by residues 218–220 and Gln-227; that span reads RDE. His-453 serves as a coordination point for L-aspartate. Glu-487 serves as a coordination point for ATP. Arg-494 serves as a coordination point for L-aspartate. ATP is bound at residue 539-542; sequence GLDR.

Belongs to the class-II aminoacyl-tRNA synthetase family. Type 1 subfamily. Homodimer.

The protein resides in the cytoplasm. The catalysed reaction is tRNA(Asp) + L-aspartate + ATP = L-aspartyl-tRNA(Asp) + AMP + diphosphate. In terms of biological role, catalyzes the attachment of L-aspartate to tRNA(Asp) in a two-step reaction: L-aspartate is first activated by ATP to form Asp-AMP and then transferred to the acceptor end of tRNA(Asp). This chain is Aspartate--tRNA ligase, found in Blochmanniella pennsylvanica (strain BPEN).